Here is a 181-residue protein sequence, read N- to C-terminus: UPF0232 protein SAV_4320 (181 aa).

Residues 1 to 10 (MSDTPAQTPE) are compositionally biased toward polar residues. Disordered stretches follow at residues 1–64 (MSDT…GRDP) and 156–181 (QGPG…DTYG). Residues 30-39 (AAKEQARARG) show a composition bias toward basic and acidic residues.

It belongs to the UPF0232 family.

The chain is UPF0232 protein SAV_4320 from Streptomyces avermitilis (strain ATCC 31267 / DSM 46492 / JCM 5070 / NBRC 14893 / NCIMB 12804 / NRRL 8165 / MA-4680).